The sequence spans 237 residues: Ubiquitin-conjugating enzyme E2 34 (237 aa).

The UBC core domain occupies A5–Q162. C87 (glycyl thioester intermediate) is an active-site residue. The interval Q168–K207 is disordered. Over residues Q180–K204 the composition is skewed to basic and acidic residues. Residues L214 to L234 form a helical membrane-spanning segment.

It belongs to the ubiquitin-conjugating enzyme family.

Its subcellular location is the membrane. The catalysed reaction is S-ubiquitinyl-[E1 ubiquitin-activating enzyme]-L-cysteine + [E2 ubiquitin-conjugating enzyme]-L-cysteine = [E1 ubiquitin-activating enzyme]-L-cysteine + S-ubiquitinyl-[E2 ubiquitin-conjugating enzyme]-L-cysteine.. It participates in protein modification; protein ubiquitination. Functionally, accepts the ubiquitin from the E1 complex and catalyzes its covalent attachment to other proteins. This chain is Ubiquitin-conjugating enzyme E2 34 (UBC34), found in Arabidopsis thaliana (Mouse-ear cress).